A 269-amino-acid polypeptide reads, in one-letter code: Integral membrane protein 2C (269 aa).

Residue Thr-39 is modified to Phosphothreonine. The helical; Signal-anchor for type II membrane protein transmembrane segment at 57-77 (VGGVCYLSMGMVVLLMGLVFA) threads the bilayer. The BRICHOS domain occupies 138 to 232 (FGGGDPADII…LCNGKDTYRL (95 aa)). A disulfide bridge connects residues Cys-165 and Cys-224. An N-linked (GlcNAc...) asparagine glycan is attached at Asn-171.

This sequence belongs to the ITM2 family. In terms of assembly, interacts with BACE1. Interacts with APP. Interacts with STMN2. In terms of processing, type I membrane-bound, as well as soluble, furin has a pre-eminent role in ITM2C proteolytic processing. PCSK7 and PCSK5 may also be involved although to a lesser extent. The soluble form of PCSK7 is incapable of processing ITM2C. Fails to undergo shedding by ADAM10 and intramembrane cleavage by SPPL2B.

It localises to the lysosome membrane. The protein resides in the cell membrane. Functionally, negative regulator of amyloid-beta peptide production. May inhibit the processing of APP by blocking its access to alpha- and beta-secretase. Binding to the beta-secretase-cleaved APP C-terminal fragment is negligible, suggesting that ITM2C is a poor gamma-secretase cleavage inhibitor. May play a role in TNF-induced cell death and neuronal differentiation. In Sus scrofa (Pig), this protein is Integral membrane protein 2C (ITM2C).